Consider the following 500-residue polypeptide: Pentatricopeptide repeat-containing protein At1g05750, chloroplastic (500 aa).

A chloroplast-targeting transit peptide spans 1–54 (MGLLPVVGITSPALITHKNHANPKIQRHNQSTSETTVSWTSRINLLTRNGRLAE). 10 PPR repeats span residues 35-69 (TTVS…GVEP), 70-106 (NHIT…GLDR), 108-138 (HVMV…MEDK), 139-173 (NSVT…DLIS), 174-204 (WTAM…GVKP), 205-239 (DYVA…DFKN), 240-270 (NVRV…MEKR), 271-305 (TVVS…GFKP), 306-336 (DAVT…MKCD), and 342-376 (RIEH…PNEV). A type E motif region spans residues 377 to 453 (VIGSLLAACS…QPGFSSIEID (77 aa)). A type E(+) motif region spans residues 454-484 (DCMHVFMAGDNAHVETTYIREVLELISSDLR).

The protein belongs to the PPR family. PCMP-E subfamily.

It localises to the plastid. It is found in the chloroplast. The sequence is that of Pentatricopeptide repeat-containing protein At1g05750, chloroplastic (PDE247) from Arabidopsis thaliana (Mouse-ear cress).